Here is a 555-residue protein sequence, read N- to C-terminus: Disabled homolog 1 (555 aa).

The segment at 1–26 (MSTETELQVAVKTSAKKDSRKKGQDR) is disordered. The segment covering 15–26 (AKKDSRKKGQDR) has biased composition (basic and acidic residues). Residues 36–189 (KGEGVRYKAK…CEQAVYQTIL (154 aa)) form the PID domain. Y198, Y220, and Y232 each carry phosphotyrosine. Disordered stretches follow at residues 386–409 (PLAT…PRQK) and 469–555 (LTPV…QDGS). The span at 391–403 (PGTNDSARSSPQS) shows a compositional bias: polar residues. Low complexity-rich tracts occupy residues 470–479 (TPVTSTTPST) and 490–501 (SSPSKSSASHVS). The residue at position 491 (S491) is a Phosphoserine; by CDK5. Acidic residues predominate over residues 504-513 (TADDIFEEGF).

As to quaternary structure, associates with the SH2 domains of SRC, FYN and ABL. Interacts (phosphorylated on tyrosine residues) with CRK and CRKL (via respective SH2 domain). Interacts with SIAH1, LRP8 and VLDLR. Interacts with LRP1. Interacts with APLP1 (via NPXY motif). Interacts with DAB2IP. Interacts with ZSWIM8. Phosphorylated by FYN on Tyr-198 and Tyr-220 upon reelin induction in embryonic neurons. Also phosphorylated on Ser-491 independently of reelin signaling. In terms of processing, ubiquitinated by various cullin-5-RING E3 ubiquitin-protein ligase complexes (ECS complexes) following ligand-binding and phosphorylation, leading to its degradation. Ubiquitinated by the ECS(SOCS7) complex in the cortical plate of the developing cerebral cortex following ligand-binding and phosphorylation by FYN, leading to its degradation by the proteasome. Recognized by ZSWIM8 through a disorder targets misorder mechanism that eliminates misfolded DAB1 via ubiquitination and proteasomal degradation.

The protein localises to the cytoplasm. Its function is as follows. Signaling adapter of the reelin-mediated signaling pathway, which regulates the migration and differentiation of postmitotic neurons during brain development. Mediates intracellular transduction of Reelin signaling following reelin (RELN)-binding to its receptor: acts by docking proteins through its phosphotyrosine residues and PID domain. In Rattus norvegicus (Rat), this protein is Disabled homolog 1 (Dab1).